The primary structure comprises 229 residues: Peptide methionine sulfoxide reductase B3, chloroplastic (229 aa).

The N-terminal 71 residues, 1–71 (MGVQHLLKLR…NHNQWAASRC (71 aa)), are a transit peptide targeting the chloroplast. Residues 102–223 (EEEWEAILSP…NSISLKFIPA (122 aa)) enclose the MsrB domain. Cysteine 141, cysteine 144, cysteine 187, and cysteine 190 together coordinate Zn(2+). An intrachain disulfide couples cysteine 159 to cysteine 212. The active-site Nucleophile is the cysteine 212.

The protein belongs to the MsrB Met sulfoxide reductase family. The cofactor is Zn(2+).

Its subcellular location is the plastid. It localises to the chloroplast. It carries out the reaction L-methionyl-[protein] + [thioredoxin]-disulfide + H2O = L-methionyl-(R)-S-oxide-[protein] + [thioredoxin]-dithiol. In terms of biological role, catalyzes the reduction of methionine sulfoxide (MetSO) to methionine in proteins. Plays a protective role against oxidative stress by restoring activity to proteins that have been inactivated by methionine oxidation. MSRB family specifically reduces the MetSO R-enantiomer. In Oryza sativa subsp. japonica (Rice), this protein is Peptide methionine sulfoxide reductase B3, chloroplastic (MSRB3).